Here is a 496-residue protein sequence, read N- to C-terminus: Catalase isozyme 3 (496 aa).

Residues 1–25 (MTMDPTKFRPSSSHDTTVTTTNAGA) are disordered. A compositionally biased stretch (polar residues) spans 9-23 (RPSSSHDTTVTTTNA). Residues H67 and N140 contribute to the active site. Y351 serves as a coordination point for heme. Residues 402–422 (PLRQAAPPTPLPPRPVAGRRE) are disordered.

Belongs to the catalase family. As to quaternary structure, homotetramer. Heme is required as a cofactor. In terms of tissue distribution, leaf mesophyll cells, pericarp, seedling roots and the coleoptile.

It is found in the mitochondrion. It carries out the reaction 2 H2O2 = O2 + 2 H2O. Functionally, occurs in almost all aerobically respiring organisms and serves to protect cells from the toxic effects of hydrogen peroxide. Its levels are highest in the light period and are lowest in the dark period, hence it may be important for scavenging hydrogen peroxide at night, rather than during the day. This is Catalase isozyme 3 (CAT3) from Zea mays (Maize).